Here is a 110-residue protein sequence, read N- to C-terminus: Insulin-1 (110 aa).

The N-terminal stretch at 1–24 is a signal peptide; that stretch reads MALWMRFLPLLALLVLWEPKPAQA. Disulfide bonds link C31–C96, C43–C109, and C95–C100. Residues 57 to 87 constitute a propeptide, c peptide; it reads EVEDPQVPQLELGGGPEAGDLQTLALEVARQ.

This sequence belongs to the insulin family. In terms of assembly, heterodimer of a B chain and an A chain linked by two disulfide bonds.

The protein localises to the secreted. Its function is as follows. Insulin decreases blood glucose concentration. It increases cell permeability to monosaccharides, amino acids and fatty acids. It accelerates glycolysis, the pentose phosphate cycle, and glycogen synthesis in liver. The sequence is that of Insulin-1 (Ins1) from Rattus norvegicus (Rat).